Consider the following 96-residue polypeptide: UPF0235 protein NT01EI_0281 (96 aa).

It belongs to the UPF0235 family.

The protein is UPF0235 protein NT01EI_0281 of Edwardsiella ictaluri (strain 93-146).